The sequence spans 540 residues: Protein SOSEKI 3 (540 aa).

Positions 32 to 123 (KKVQIVYYLS…YVLKGSELFD (92 aa)) are DIX-like oligomerization domain. 2 disordered regions span residues 147 to 201 (EPPS…DAKN) and 219 to 294 (ADAS…SSLG). Composition is skewed to low complexity over residues 150 to 163 (SSRS…SSSM) and 185 to 194 (RSVSSSGVSP). Residues 221-244 (ASTQTDETVSGRSKTPIETFSRGV) are compositionally biased toward polar residues. A compositionally biased stretch (acidic residues) spans 246–256 (TDEDVSSEPET). A compositionally biased stretch (low complexity) spans 280 to 292 (NSVSPPFSNSASS). Positions 342-343 (CG) match the Association to cell membranes motif. The disordered stretch occupies residues 412–492 (KKDAADSNAS…KNIPCTTKTH (81 aa)). The span at 418–437 (SNASLKRSSSYNGDRASNQM) shows a compositional bias: polar residues. A compositionally biased stretch (basic and acidic residues) spans 471–482 (SEKRRDSSEDTT).

Belongs to the SOSEKI family. As to quaternary structure, homodimer. Forms long polymer filaments with other SOKs proteins polymers (e.g. SOK1, SOK2, SOK3 and SOK4) crucial for polar localization and biological activity. Binds to ANGUSTIFOLIA (AN). In terms of tissue distribution, expressed during embryogenesis and in roots.

It localises to the cell membrane. In terms of biological role, SOSEKI proteins (SOK1-5) locally interpret global polarity cues and can influence cell division orientation to coordinate cell polarization relative to body axes, probably by guiding ANGUSTIFOLIA (AN) polarized localization. This chain is Protein SOSEKI 3, found in Arabidopsis thaliana (Mouse-ear cress).